Reading from the N-terminus, the 1131-residue chain is Phytochrome B1 (1131 aa).

Positions 1–11 (MASGSRTKHSY) are enriched in basic residues. Residues 1 to 26 (MASGSRTKHSYHNSSQGQAQSSGTSN) form a disordered region. A compositionally biased stretch (low complexity) spans 14–25 (SSQGQAQSSGTS). The GAF domain maps to 229-408 (DIKLLCDTVV…AFGLQLNMEL (180 aa)). C334 contributes to the phytochromobilin binding site. PAS domains are found at residues 622-693 (VARE…LRGV) and 756-808 (DYKA…GEIF). The region spanning 904-1124 (YICQEVKSPL…MIILDLPMTR (221 aa)) is the Histidine kinase domain.

The protein belongs to the phytochrome family. As to quaternary structure, homodimer. Post-translationally, contains one covalently linked phytochromobilin chromophore.

In terms of biological role, regulatory photoreceptor which exists in two forms that are reversibly interconvertible by light: the Pr form that absorbs maximally in the red region of the spectrum and the Pfr form that absorbs maximally in the far-red region. Photoconversion of Pr to Pfr induces an array of morphogenic responses, whereas reconversion of Pfr to Pr cancels the induction of those responses. Pfr controls the expression of a number of nuclear genes including those encoding the small subunit of ribulose-bisphosphate carboxylase, chlorophyll A/B binding protein, protochlorophyllide reductase, rRNA, etc. It also controls the expression of its own gene(s) in a negative feedback fashion. This chain is Phytochrome B1, found in Solanum lycopersicum (Tomato).